A 175-amino-acid chain; its full sequence is Lipopolysaccharide export system protein LptH (175 aa).

Residues 1 to 24 (MRFVNTLPLIFGLTAALGSSMALA) form the signal peptide.

It belongs to the LptA family. As to quaternary structure, component of the lipopolysaccharide transport and assembly complex. Mainly exists as a dimer in solution. Tends to oligomerize already in solution. The protomers follow one another in a head-to-tail fashion throughout the crystal lattice, yielding a continuous fiber arrangement.

The protein localises to the periplasm. Functionally, involved in the assembly of lipopolysaccharide (LPS). Required for the translocation of LPS from the inner membrane to the outer membrane. May form a bridge between the inner membrane and the outer membrane, via interactions with LptC and LptD, thereby facilitating LPS transfer across the periplasm. Binds LPS. Important for cell envelope stability and essential for growth, cell viability and ability to cause infection in different animal models. The polypeptide is Lipopolysaccharide export system protein LptH (Pseudomonas aeruginosa (strain ATCC 15692 / DSM 22644 / CIP 104116 / JCM 14847 / LMG 12228 / 1C / PRS 101 / PAO1)).